The primary structure comprises 388 residues: Chorismate synthase (388 aa).

NADP(+)-binding residues include R39 and R45. The tract at residues 95 to 118 (EKNEKSRRVSRPRPGHADLVGGMK) is disordered. Residues 130 to 132 (RSS), 251 to 252 (NA), G296, 311 to 315 (KPIPT), and R337 contribute to the FMN site.

The protein belongs to the chorismate synthase family. Homotetramer. FMNH2 serves as cofactor.

The enzyme catalyses 5-O-(1-carboxyvinyl)-3-phosphoshikimate = chorismate + phosphate. Its pathway is metabolic intermediate biosynthesis; chorismate biosynthesis; chorismate from D-erythrose 4-phosphate and phosphoenolpyruvate: step 7/7. Functionally, catalyzes the anti-1,4-elimination of the C-3 phosphate and the C-6 proR hydrogen from 5-enolpyruvylshikimate-3-phosphate (EPSP) to yield chorismate, which is the branch point compound that serves as the starting substrate for the three terminal pathways of aromatic amino acid biosynthesis. This reaction introduces a second double bond into the aromatic ring system. This Listeria innocua serovar 6a (strain ATCC BAA-680 / CLIP 11262) protein is Chorismate synthase.